The following is a 1131-amino-acid chain: Translation initiation factor IF-2 (1131 aa).

Residues 49-542 (KFKGSVSSNE…AFIMPKPQQS (494 aa)) are disordered. Over residues 60–75 (KSIDNGKASRVEKPEK) the composition is skewed to basic and acidic residues. Polar residues-rich tracts occupy residues 76–88 (NNSV…QTPS) and 108–125 (SEQN…NIQS). Residues 127 to 138 (GDRKYQHTDRRP) are compositionally biased toward basic and acidic residues. Residues 139–152 (QGNNGEGPQTSTNS) are compositionally biased toward polar residues. Basic and acidic residues-rich tracts occupy residues 164–180 (GDRR…RPYN) and 223–239 (GDRR…RPYN). Residues 411–436 (GQGGYGGRPQGQGSYGGRPQGQGGYA) are compositionally biased toward gly residues. 2 stretches are compositionally biased toward basic and acidic residues: residues 450 to 479 (KDFD…KSSI) and 487 to 530 (LTKE…DPNR). In terms of domain architecture, tr-type G spans 632–801 (KRPPVVCVMG…ILTAEMGELK (170 aa)). The interval 641–648 (GHVDHGKT) is G1. 641-648 (GHVDHGKT) contributes to the GTP binding site. The segment at 666–670 (GITQH) is G2. Residues 687-690 (DTPG) are G3. GTP contacts are provided by residues 687 to 691 (DTPGH) and 741 to 744 (NKID). The tract at residues 741-744 (NKID) is G4. A G5 region spans residues 777–779 (SAH).

It belongs to the TRAFAC class translation factor GTPase superfamily. Classic translation factor GTPase family. IF-2 subfamily.

It localises to the cytoplasm. Functionally, one of the essential components for the initiation of protein synthesis. Protects formylmethionyl-tRNA from spontaneous hydrolysis and promotes its binding to the 30S ribosomal subunits. Also involved in the hydrolysis of GTP during the formation of the 70S ribosomal complex. The sequence is that of Translation initiation factor IF-2 from Lachnoclostridium phytofermentans (strain ATCC 700394 / DSM 18823 / ISDg) (Clostridium phytofermentans).